The following is an 80-amino-acid chain: Small ribosomal subunit protein bS18 (80 aa).

This sequence belongs to the bacterial ribosomal protein bS18 family. Part of the 30S ribosomal subunit. Forms a tight heterodimer with protein bS6.

Its function is as follows. Binds as a heterodimer with protein bS6 to the central domain of the 16S rRNA, where it helps stabilize the platform of the 30S subunit. This is Small ribosomal subunit protein bS18 from Clostridium botulinum (strain 657 / Type Ba4).